We begin with the raw amino-acid sequence, 196 residues long: Imidazoleglycerol-phosphate dehydratase (196 aa).

This sequence belongs to the imidazoleglycerol-phosphate dehydratase family.

Its subcellular location is the cytoplasm. The catalysed reaction is D-erythro-1-(imidazol-4-yl)glycerol 3-phosphate = 3-(imidazol-4-yl)-2-oxopropyl phosphate + H2O. It functions in the pathway amino-acid biosynthesis; L-histidine biosynthesis; L-histidine from 5-phospho-alpha-D-ribose 1-diphosphate: step 6/9. This is Imidazoleglycerol-phosphate dehydratase from Oleidesulfovibrio alaskensis (strain ATCC BAA-1058 / DSM 17464 / G20) (Desulfovibrio alaskensis).